A 195-amino-acid chain; its full sequence is Orotate phosphoribosyltransferase (195 aa).

5-phospho-alpha-D-ribose 1-diphosphate is bound at residue 117–125 (EDITTTGGS). Orotate-binding residues include Thr121 and Arg149.

Belongs to the purine/pyrimidine phosphoribosyltransferase family. PyrE subfamily. In terms of assembly, homodimer. The cofactor is Mg(2+).

The enzyme catalyses orotidine 5'-phosphate + diphosphate = orotate + 5-phospho-alpha-D-ribose 1-diphosphate. It functions in the pathway pyrimidine metabolism; UMP biosynthesis via de novo pathway; UMP from orotate: step 1/2. In terms of biological role, catalyzes the transfer of a ribosyl phosphate group from 5-phosphoribose 1-diphosphate to orotate, leading to the formation of orotidine monophosphate (OMP). The sequence is that of Orotate phosphoribosyltransferase from Acidithiobacillus ferrooxidans (strain ATCC 53993 / BNL-5-31) (Leptospirillum ferrooxidans (ATCC 53993)).